Consider the following 146-residue polypeptide: Large ribosomal subunit protein uL15 (146 aa).

The segment covering 1 to 13 has biased composition (basic and acidic residues); sequence MKLHELKPAEGSR. Positions 1 to 65 are disordered; it reads MKLHELKPAE…PLYRRLPKRG (65 aa). 2 stretches are compositionally biased toward gly residues: residues 21-31 and 42-52; these read RGIGSGNGKTA and SGGGVRPGFEG.

This sequence belongs to the universal ribosomal protein uL15 family. Part of the 50S ribosomal subunit.

Binds to the 23S rRNA. The sequence is that of Large ribosomal subunit protein uL15 from Halalkalibacterium halodurans (strain ATCC BAA-125 / DSM 18197 / FERM 7344 / JCM 9153 / C-125) (Bacillus halodurans).